The sequence spans 257 residues: 5-oxoprolinase subunit A (257 aa).

It belongs to the LamB/PxpA family. As to quaternary structure, forms a complex composed of PxpA, PxpB and PxpC.

The enzyme catalyses 5-oxo-L-proline + ATP + 2 H2O = L-glutamate + ADP + phosphate + H(+). Catalyzes the cleavage of 5-oxoproline to form L-glutamate coupled to the hydrolysis of ATP to ADP and inorganic phosphate. In Fusobacterium nucleatum subsp. nucleatum (strain ATCC 25586 / DSM 15643 / BCRC 10681 / CIP 101130 / JCM 8532 / KCTC 2640 / LMG 13131 / VPI 4355), this protein is 5-oxoprolinase subunit A.